The primary structure comprises 384 residues: Putative 8-amino-7-oxononanoate synthase (384 aa).

Arginine 19 contacts substrate. 106-107 (GY) contacts pyridoxal 5'-phosphate. Histidine 131 lines the substrate pocket. Residues serine 177, 202-205 (DDAH), and 233-236 (TLSK) each bind pyridoxal 5'-phosphate. Lysine 236 is modified (N6-(pyridoxal phosphate)lysine).

It belongs to the class-II pyridoxal-phosphate-dependent aminotransferase family. BioF subfamily. Homodimer. Pyridoxal 5'-phosphate serves as cofactor.

The enzyme catalyses 6-carboxyhexanoyl-[ACP] + L-alanine + H(+) = (8S)-8-amino-7-oxononanoate + holo-[ACP] + CO2. It participates in cofactor biosynthesis; biotin biosynthesis. In terms of biological role, catalyzes the decarboxylative condensation of pimeloyl-[acyl-carrier protein] and L-alanine to produce 8-amino-7-oxononanoate (AON), [acyl-carrier protein], and carbon dioxide. This chain is Putative 8-amino-7-oxononanoate synthase (bioF), found in Desulforudis audaxviator (strain MP104C).